Here is a 203-residue protein sequence, read N- to C-terminus: MENLIIYLLAYLIGAIPFGLLLAQIFAKTNIKNAGSKSIGATNVLRVVKESNPKLAKTLAVATVILDALKGVLPILMAKFYGFDDNILWTMAVLAVFGHCFSPYLKFEGGKGVATGAGVLAVFLPFEIICALLAWFIIGKVFKISSLASLGAMIVLIATSFIFHYDIPVINTHAPIFIIAFIVVYKHIPNILRLIGKQECKVI.

6 consecutive transmembrane segments (helical) span residues 5–25, 58–78, 87–107, 118–138, 150–170, and 176–196; these read IIYL…LAQI, TLAV…ILMA, ILWT…YLKF, GVLA…WFII, LGAM…IPVI, and IFII…RLIG.

This sequence belongs to the PlsY family. In terms of assembly, probably interacts with PlsX.

It is found in the cell inner membrane. The enzyme catalyses an acyl phosphate + sn-glycerol 3-phosphate = a 1-acyl-sn-glycero-3-phosphate + phosphate. The protein operates within lipid metabolism; phospholipid metabolism. Catalyzes the transfer of an acyl group from acyl-phosphate (acyl-PO(4)) to glycerol-3-phosphate (G3P) to form lysophosphatidic acid (LPA). This enzyme utilizes acyl-phosphate as fatty acyl donor, but not acyl-CoA or acyl-ACP. The polypeptide is Glycerol-3-phosphate acyltransferase (Campylobacter lari (strain RM2100 / D67 / ATCC BAA-1060)).